We begin with the raw amino-acid sequence, 314 residues long: DNA-directed RNA polymerase subunit alpha (314 aa).

Residues 1–228 (MIEIEKPKIE…EHLNIFVGLT (228 aa)) form an alpha N-terminal domain (alpha-NTD) region. The tract at residues 245–314 (KEKVLEMTIE…ELGLGLRKDD (70 aa)) is alpha C-terminal domain (alpha-CTD).

This sequence belongs to the RNA polymerase alpha chain family. Homodimer. The RNAP catalytic core consists of 2 alpha, 1 beta, 1 beta' and 1 omega subunit. When a sigma factor is associated with the core the holoenzyme is formed, which can initiate transcription.

The catalysed reaction is RNA(n) + a ribonucleoside 5'-triphosphate = RNA(n+1) + diphosphate. Its function is as follows. DNA-dependent RNA polymerase catalyzes the transcription of DNA into RNA using the four ribonucleoside triphosphates as substrates. This is DNA-directed RNA polymerase subunit alpha from Bacillus thuringiensis (strain Al Hakam).